A 143-amino-acid chain; its full sequence is Heat shock protein 16 (143 aa).

Residues 30 to 143 (QIPGELSPSI…SQTKKQIAIK (114 aa)) enclose the sHSP domain.

It belongs to the small heat shock protein (HSP20) family.

It localises to the cytoplasm. The protein localises to the nucleus. The sequence is that of Heat shock protein 16 (hsp16) from Schizosaccharomyces pombe (strain 972 / ATCC 24843) (Fission yeast).